The chain runs to 330 residues: B3 domain-containing protein REM21 (330 aa).

Positions 23-116 (PRFFTVFLSH…SYEVSIYGRG (94 aa)) form a DNA-binding region, TF-B3. Acidic residues predominate over residues 129–138 (EISDDTEDDN). The tract at residues 129–169 (EISDDTEDDNVSLHSPSNVSLDSLSNDSHHSTSNVSLRSLS) is disordered. Positions 142–162 (HSPSNVSLDSLSNDSHHSTSN) are enriched in low complexity.

Its subcellular location is the nucleus. In Arabidopsis thaliana (Mouse-ear cress), this protein is B3 domain-containing protein REM21 (REM21).